Consider the following 141-residue polypeptide: MAARLCCQLDSARDVLLLRPIGPQSSGPPFPRPAAGSAASSASSPSPSDESDLPLGRLPACFASASGPCCLVFTCADLRTMDSTVNFVSWHAKRQLGMPSKDLWTPYIKDQLLTKWEEGSIDPRLSIFVLGGCRHKCMRLL.

Residues 22 to 52 (GPQSSGPPFPRPAAGSAASSASSPSPSDESD) form a disordered region. Low complexity predominate over residues 33-48 (PAAGSAASSASSPSPS). Residues 68–113 (PCCLVFTCADLRTMDSTVNFVSWHAKRQLGMPSKDLWTPYIKDQLL) are mitochondrial targeting sequence.

Belongs to the orthohepadnavirus protein X family. In terms of assembly, may form homodimer. May interact with host CEBPA, CFLAR, CREB1, DDB1, E4F1, HBXIP, HSPD1/HSP60, NFKBIA, POLR2E and SMAD4. Interacts with host SMC5-SMC6 complex and induces its degradation. Interacts with host TRPC4AP; leading to prevent ubiquitination of TRPC4AP. Interacts with host PLSCR1; this interaction promotes ubiquitination and degradation of HBx and impairs HBx-mediated cell proliferation. A fraction may be phosphorylated in insect cells and HepG2 cells, a human hepatoblastoma cell line. Phosphorylated in vitro by host protein kinase C or mitogen-activated protein kinase. N-acetylated in insect cells.

It localises to the host cytoplasm. The protein localises to the host nucleus. Its subcellular location is the host mitochondrion. Multifunctional protein that plays a role in silencing host antiviral defenses and promoting viral transcription. Does not seem to be essential for HBV infection. May be directly involved in development of cirrhosis and liver cancer (hepatocellular carcinoma). Most of cytosolic activities involve modulation of cytosolic calcium. The effect on apoptosis is controversial depending on the cell types in which the studies have been conducted. May induce apoptosis by localizing in mitochondria and causing loss of mitochondrial membrane potential. May also modulate apoptosis by binding host CFLAR, a key regulator of the death-inducing signaling complex (DISC). Promotes viral transcription by using the host E3 ubiquitin ligase DDB1 to target the SMC5-SMC6 complex to proteasomal degradation. This host complex would otherwise bind to viral episomal DNA, and prevents its transcription. Moderately stimulates transcription of many different viral and cellular transcription elements. Promoters and enhancers stimulated by HBx contain DNA binding sites for NF-kappa-B, AP-1, AP-2, c-EBP, ATF/CREB, or the calcium-activated factor NF-AT. This chain is Protein X, found in Woodchuck hepatitis B virus (isolate w64/pWS23) (WHV).